The primary structure comprises 203 residues: MECRNPKVSSANITVLGVIQIMIGIYHVLMWYFLLLLYMGQIKGVFGTYEPVTYKMGTSLWGFAFVISGAFTVKAAKYQSRHMILCTMSLNILCIIITIVAASLTIVELSHFRSVSYRNYGQAKLGREVSRVLLCSYPLEFAIALLYSISSCAYLPLSSIVKSLVRKTWRLSSLAAWRQMIWLEAGNQEETLESVTEVVEGNS.

4 consecutive transmembrane segments (helical) span residues 15-35 (VLGV…YFLL), 56-76 (MGTS…VKAA), 84-104 (ILCT…AASL), and 141-161 (FAIA…SSIV).

Belongs to the MS4A family.

It is found in the membrane. In terms of biological role, may be involved in signal transduction as a component of a multimeric receptor complex. The chain is Membrane-spanning 4-domains subfamily A member 13 (Ms4a13) from Mus musculus (Mouse).